Here is a 610-residue protein sequence, read N- to C-terminus: UvrABC system protein C (610 aa).

The GIY-YIG domain occupies 16–94 (SQPGVYRMYD…IKLYQPRYNV (79 aa)). The UVR domain maps to 204 to 239 (DQVLTQLISRMETASQNLEFEEAARIRDQIQAVRRV).

It belongs to the UvrC family. In terms of assembly, interacts with UvrB in an incision complex.

The protein resides in the cytoplasm. The UvrABC repair system catalyzes the recognition and processing of DNA lesions. UvrC both incises the 5' and 3' sides of the lesion. The N-terminal half is responsible for the 3' incision and the C-terminal half is responsible for the 5' incision. The polypeptide is UvrABC system protein C (Escherichia coli (strain ATCC 8739 / DSM 1576 / NBRC 3972 / NCIMB 8545 / WDCM 00012 / Crooks)).